Here is a 1060-residue protein sequence, read N- to C-terminus: Positive regulator of purine utilization (1060 aa).

Residues 1 to 15 (MLNPSTSDIHTSPTA) show a composition bias toward polar residues. Residues 1–48 (MLNPSTSDIHTSPTAVGNGRKRPHPIADSGSAMPSDPSAQQLPHPANE) form a disordered region. Positions 67-94 (CNRCRQRKNRCDQRLPRCQACEKAGVRC) form a DNA-binding region, zn(2)-C6 fungal-type. 5 disordered regions span residues 163 to 207 (EIAA…DAED), 251 to 282 (SVPG…TTRD), 367 to 391 (AEDQ…SRQY), 811 to 862 (VQTS…RFDM), and 877 to 969 (RQGS…PSGM). Composition is skewed to basic and acidic residues over residues 170-182 (SNDK…KEKN), 189-207 (KASR…DAED), and 260-269 (GPSRPKERLP). The segment covering 272–282 (ATGTEGSTTRD) has biased composition (polar residues). A compositionally biased stretch (basic and acidic residues) spans 367 to 377 (AEDQKEGRDHS). Residues 811-831 (VQTSTSGSRQFNATQSRSRPY) show a composition bias toward polar residues. 2 stretches are compositionally biased toward low complexity: residues 832 to 859 (SRQQ…PLPR) and 930 to 952 (PRYY…AASG).

The protein resides in the nucleus. Functionally, mediates the induction of a number of unlinked genes involved in purine utilization. Binds to the consensus sequence 5'-TCGGNNNNNNCCGA-3'. In Emericella nidulans (strain FGSC A4 / ATCC 38163 / CBS 112.46 / NRRL 194 / M139) (Aspergillus nidulans), this protein is Positive regulator of purine utilization (uaY).